The chain runs to 295 residues: Glycine--tRNA ligase alpha subunit (295 aa).

Belongs to the class-II aminoacyl-tRNA synthetase family. In terms of assembly, tetramer of two alpha and two beta subunits.

The protein resides in the cytoplasm. It catalyses the reaction tRNA(Gly) + glycine + ATP = glycyl-tRNA(Gly) + AMP + diphosphate. This is Glycine--tRNA ligase alpha subunit from Thermosynechococcus vestitus (strain NIES-2133 / IAM M-273 / BP-1).